The primary structure comprises 387 residues: Calcium sensing receptor, chloroplastic (387 aa).

The N-terminal 33 residues, methionine 1–serine 33, are a transit peptide targeting the chloroplast. Topologically, residues valine 34 to proline 186 are lumenal, thylakoid. A helical transmembrane segment spans residues serine 187–phenylalanine 207. At serine 208 to aspartate 387 the chain is on the stromal side. Residues cysteine 231 to serine 352 form the Rhodanese domain. Threonine 380 carries the post-translational modification Phosphothreonine.

Phosphorylation seems to be light-dependent. As to expression, predominantly expressed in the shoot, including guard cells.

The protein resides in the plastid. The protein localises to the chloroplast thylakoid membrane. In terms of biological role, modulates cytoplasmic Ca(2+) concentration and is crucial for proper stomatal regulation in response to elevated levels of external Ca(2+). May function by regulating concentrations of inositol 1,4,5-trisphosphate (IP3), which in turn triggers release of Ca(2+) from internal stores. May play a role in de-etiolation. The protein is Calcium sensing receptor, chloroplastic (CAS) of Arabidopsis thaliana (Mouse-ear cress).